Reading from the N-terminus, the 354-residue chain is Protein OVEREXPRESSOR OF CATIONIC PEROXIDASE 3 (354 aa).

Residues 63 to 70 carry the Nuclear localization signal 1 motif; the sequence is NRKGFVSS. Disordered stretches follow at residues 65-98 and 151-186; these read KGFVSSSSSSPKKNKKKSLDGADNGGGEEEEDPF and TGDVDVDVDNDDDDNDDDDNDDDDDDSEEDERPTKL. Residues 154-181 are compositionally biased toward acidic residues; that stretch reads VDVDVDNDDDDNDDDDNDDDDDDSEEDE. The Nuclear localization signal 2 signature appears at 191–198; that stretch reads LKRLAYAL. The interval 243–264 is disordered; it reads KPPVAAPENSSPDPSPVESLSA. Residues 286–345 constitute a DNA-binding region (homeobox); that stretch reads RWSAQKRVKKAHIETLEKVYRRSKRPTNAVVSSIVQVTNLPRKRVLKWFEDKRAEDGVPD. Residues 293–300 carry the Nuclear localization signal 3 motif; sequence VKKAHIET.

Its subcellular location is the nucleus. May modulate chromatin structure by regulation of nucleosome assembly/disassembly. Homeodomain transcription factor that mediates jasmonic acid (JA)-mediated COI1-dependent and abscisic acid (ABA)-mediated PMR4-dependent resistance to infection by necrotrophic fungal pathogens (e.g. B.cinerea and P.cucumerina) and bacterial pathogens (e.g. P.syringae DC3000); this resistance involves at least callose deposition. Required for the P.fluorescens WCS417r-triggered JA-dependent induced systemic resistance (ISR) against both P.syringae DC3000 and H.arabidopsidis. Negative regulator of the ABA-dependent drought resistance. In Arabidopsis thaliana (Mouse-ear cress), this protein is Protein OVEREXPRESSOR OF CATIONIC PEROXIDASE 3.